Reading from the N-terminus, the 154-residue chain is MGLSDGEWQLVLNVWGKVEADLAGHGQDILIRLFKGHPETLEKFDKFKHLKTEADMKASEDLKKHGNTVLTALGAILKKKGHHEAELKPLAQSHATKHKIPIKYLEFISEAIIHVLHSRHPAEFGADAQGAMNKALELFRKDIAAKYKELGFHG.

Positions Gly2 to Lys148 constitute a Globin domain. A Phosphoserine modification is found at Ser4. Position 65 (His65) interacts with nitrite. Residue His65 participates in O2 binding. Position 68 is a phosphothreonine (Thr68). Residue His94 coordinates heme b.

Belongs to the globin family. In terms of assembly, monomeric.

It is found in the cytoplasm. It localises to the sarcoplasm. The catalysed reaction is Fe(III)-heme b-[protein] + nitric oxide + H2O = Fe(II)-heme b-[protein] + nitrite + 2 H(+). It carries out the reaction H2O2 + AH2 = A + 2 H2O. Functionally, monomeric heme protein which primary function is to store oxygen and facilitate its diffusion within muscle tissues. Reversibly binds oxygen through a pentacoordinated heme iron and enables its timely and efficient release as needed during periods of heightened demand. Depending on the oxidative conditions of tissues and cells, and in addition to its ability to bind oxygen, it also has a nitrite reductase activity whereby it regulates the production of bioactive nitric oxide. Under stress conditions, like hypoxia and anoxia, it also protects cells against reactive oxygen species thanks to its pseudoperoxidase activity. This is Myoglobin (MB) from Globicephala melas (Long-finned pilot whale).